The sequence spans 222 residues: MSRSDKNPHERLKTAKKRTASSARWLSRQLNDPYVKKAKAEGWRSRAAFKLIELDEKFGLLKGAKRVVDLGIAPGGWSQVVRKKAPAAKIVGIDLLPTEPIEGVTIFEMDFMADEAPEALQSALDGPPDLVLSDMAANTVGHKQTDHLRTMGLVETAVDFAVQTLAPGGAFVAKVFAGGTDTELLAILKKNFTTVKHAKPPASRKDSSEWYVIAQGFKGRPD.

Residues methionine 1 to lysine 13 show a composition bias toward basic and acidic residues. Positions methionine 1 to serine 22 are disordered. S-adenosyl-L-methionine is bound by residues glycine 75, tryptophan 77, aspartate 94, aspartate 110, and aspartate 134. The active-site Proton acceptor is the lysine 174.

The protein belongs to the class I-like SAM-binding methyltransferase superfamily. RNA methyltransferase RlmE family.

Its subcellular location is the cytoplasm. It catalyses the reaction uridine(2552) in 23S rRNA + S-adenosyl-L-methionine = 2'-O-methyluridine(2552) in 23S rRNA + S-adenosyl-L-homocysteine + H(+). Its function is as follows. Specifically methylates the uridine in position 2552 of 23S rRNA at the 2'-O position of the ribose in the fully assembled 50S ribosomal subunit. The polypeptide is Ribosomal RNA large subunit methyltransferase E (Novosphingobium aromaticivorans (strain ATCC 700278 / DSM 12444 / CCUG 56034 / CIP 105152 / NBRC 16084 / F199)).